The following is a 391-amino-acid chain: 3-ketoacyl-CoA thiolase (391 aa).

Catalysis depends on C95, which acts as the Acyl-thioester intermediate. Residues H347 and C377 each act as proton acceptor in the active site.

This sequence belongs to the thiolase-like superfamily. Thiolase family. As to quaternary structure, heterotetramer of two alpha chains (FadB) and two beta chains (FadA).

The protein resides in the cytoplasm. The catalysed reaction is an acyl-CoA + acetyl-CoA = a 3-oxoacyl-CoA + CoA. It participates in lipid metabolism; fatty acid beta-oxidation. Its function is as follows. Catalyzes the final step of fatty acid oxidation in which acetyl-CoA is released and the CoA ester of a fatty acid two carbons shorter is formed. This chain is 3-ketoacyl-CoA thiolase, found in Pseudomonas syringae pv. tomato (strain ATCC BAA-871 / DC3000).